Consider the following 360-residue polypeptide: Peptide chain release factor 1 (360 aa).

Q235 carries the N5-methylglutamine modification.

The protein belongs to the prokaryotic/mitochondrial release factor family. Post-translationally, methylated by PrmC. Methylation increases the termination efficiency of RF1.

The protein resides in the cytoplasm. Peptide chain release factor 1 directs the termination of translation in response to the peptide chain termination codons UAG and UAA. The sequence is that of Peptide chain release factor 1 from Burkholderia mallei (strain NCTC 10247).